The sequence spans 544 residues: Chaperonin GroEL 1 (544 aa).

ATP contacts are provided by residues 29-32 (TLGP), 86-90 (DGTTT), Gly-413, 479-481 (NAA), and Asp-495.

This sequence belongs to the chaperonin (HSP60) family. In terms of assembly, forms a cylinder of 14 subunits composed of two heptameric rings stacked back-to-back. Interacts with the co-chaperonin GroES.

It localises to the cytoplasm. It carries out the reaction ATP + H2O + a folded polypeptide = ADP + phosphate + an unfolded polypeptide.. Together with its co-chaperonin GroES, plays an essential role in assisting protein folding. The GroEL-GroES system forms a nano-cage that allows encapsulation of the non-native substrate proteins and provides a physical environment optimized to promote and accelerate protein folding. This chain is Chaperonin GroEL 1, found in Parasynechococcus marenigrum (strain WH8102).